The following is a 430-amino-acid chain: Serine--tRNA ligase (430 aa).

Residues 41–60 form a disordered region; the sequence is QSRTQDLQNERNVRSKSIGK. 236-238 contacts L-serine; sequence TAE. 267-269 is an ATP binding site; sequence RSE. L-serine is bound at residue Glu290. 354-357 is a binding site for ATP; the sequence is EISS. Ser390 is a binding site for L-serine.

Belongs to the class-II aminoacyl-tRNA synthetase family. Type-1 seryl-tRNA synthetase subfamily. In terms of assembly, homodimer. The tRNA molecule binds across the dimer.

The protein resides in the cytoplasm. It carries out the reaction tRNA(Ser) + L-serine + ATP = L-seryl-tRNA(Ser) + AMP + diphosphate + H(+). The catalysed reaction is tRNA(Sec) + L-serine + ATP = L-seryl-tRNA(Sec) + AMP + diphosphate + H(+). The protein operates within aminoacyl-tRNA biosynthesis; selenocysteinyl-tRNA(Sec) biosynthesis; L-seryl-tRNA(Sec) from L-serine and tRNA(Sec): step 1/1. In terms of biological role, catalyzes the attachment of serine to tRNA(Ser). Is also able to aminoacylate tRNA(Sec) with serine, to form the misacylated tRNA L-seryl-tRNA(Sec), which will be further converted into selenocysteinyl-tRNA(Sec). The polypeptide is Serine--tRNA ligase (Alteromonas mediterranea (strain DSM 17117 / CIP 110805 / LMG 28347 / Deep ecotype)).